Consider the following 145-residue polypeptide: MAPKKKKKVTGLIKLQIQAGQANPAPPVGPALGAHGVNIMEFCKAYNAATENQRGNVVPVEITVYEDRSFDFKLKTPPAAKLLLKAAGLQKGSGVPHTQKVGKVSMAQVREIAETKKEDLNARDIDAAAKIIAGTARSMGITVEG.

It belongs to the universal ribosomal protein uL11 family. As to quaternary structure, part of the ribosomal stalk of the 50S ribosomal subunit. Interacts with L10 and the large rRNA to form the base of the stalk. L10 forms an elongated spine to which L12 dimers bind in a sequential fashion forming a multimeric L10(L12)X complex. One or more lysine residues are methylated.

In terms of biological role, forms part of the ribosomal stalk which helps the ribosome interact with GTP-bound translation factors. In Corynebacterium glutamicum (strain ATCC 13032 / DSM 20300 / JCM 1318 / BCRC 11384 / CCUG 27702 / LMG 3730 / NBRC 12168 / NCIMB 10025 / NRRL B-2784 / 534), this protein is Large ribosomal subunit protein uL11.